A 227-amino-acid polypeptide reads, in one-letter code: Response regulator protein TodT (227 aa).

Residues 28 to 142 (VIYILDDDNA…ELLGAIRAAL (115 aa)) enclose the Response regulatory domain. Asp77 is subject to 4-aspartylphosphate. Positions 158-223 (LKENYESLSK…DLVRVTERLK (66 aa)) constitute an HTH luxR-type domain. Positions 182 to 201 (NKQTALELDISEATVKVHRH) form a DNA-binding region, H-T-H motif.

Phosphorylated by TodS.

It is found in the cytoplasm. In terms of biological role, member of the two-component regulatory system TodS/TodT involved in the regulation of toluene degradation. Phosphorylated TodT activates transcription of the tod operon (todXFC1C2BADEGIH). Binds specifically to a 6-bp palindromic DNA structure in the tod promoter region. The polypeptide is Response regulator protein TodT (todT) (Pseudomonas putida (strain ATCC 700007 / DSM 6899 / JCM 31910 / BCRC 17059 / LMG 24140 / F1)).